The sequence spans 375 residues: UDP-N-acetylglucosamine--N-acetylmuramyl-(pentapeptide) pyrophosphoryl-undecaprenol N-acetylglucosamine transferase (375 aa).

Residues 13-15 (TGG), Asn124, Arg165, Ser193, and Gln294 each bind UDP-N-acetyl-alpha-D-glucosamine.

This sequence belongs to the glycosyltransferase 28 family. MurG subfamily.

It is found in the cell inner membrane. It carries out the reaction di-trans,octa-cis-undecaprenyl diphospho-N-acetyl-alpha-D-muramoyl-L-alanyl-D-glutamyl-meso-2,6-diaminopimeloyl-D-alanyl-D-alanine + UDP-N-acetyl-alpha-D-glucosamine = di-trans,octa-cis-undecaprenyl diphospho-[N-acetyl-alpha-D-glucosaminyl-(1-&gt;4)]-N-acetyl-alpha-D-muramoyl-L-alanyl-D-glutamyl-meso-2,6-diaminopimeloyl-D-alanyl-D-alanine + UDP + H(+). It participates in cell wall biogenesis; peptidoglycan biosynthesis. Functionally, cell wall formation. Catalyzes the transfer of a GlcNAc subunit on undecaprenyl-pyrophosphoryl-MurNAc-pentapeptide (lipid intermediate I) to form undecaprenyl-pyrophosphoryl-MurNAc-(pentapeptide)GlcNAc (lipid intermediate II). The polypeptide is UDP-N-acetylglucosamine--N-acetylmuramyl-(pentapeptide) pyrophosphoryl-undecaprenol N-acetylglucosamine transferase (Brucella anthropi (strain ATCC 49188 / DSM 6882 / CCUG 24695 / JCM 21032 / LMG 3331 / NBRC 15819 / NCTC 12168 / Alc 37) (Ochrobactrum anthropi)).